Reading from the N-terminus, the 246-residue chain is Uridylate kinase (246 aa).

20-23 (KISG) lines the ATP pocket. The tract at residues 28-33 (GDQGYG) is involved in allosteric activation by GTP. Residue G62 participates in UMP binding. G63 and R67 together coordinate ATP. UMP-binding positions include D82 and 143–150 (TGNPYFTT). ATP-binding residues include T170, Y176, and D179.

This sequence belongs to the UMP kinase family. In terms of assembly, homohexamer.

The protein resides in the cytoplasm. The enzyme catalyses UMP + ATP = UDP + ADP. Its pathway is pyrimidine metabolism; CTP biosynthesis via de novo pathway; UDP from UMP (UMPK route): step 1/1. Allosterically activated by GTP. Inhibited by UTP. In terms of biological role, catalyzes the reversible phosphorylation of UMP to UDP. The protein is Uridylate kinase of Cereibacter sphaeroides (strain ATCC 17029 / ATH 2.4.9) (Rhodobacter sphaeroides).